We begin with the raw amino-acid sequence, 226 residues long: Protein YAE1 homolog (226 aa).

Positions G45 to A85 are deca-GX3 motif; required for interaction with LTO1.

Forms a complex with LTO1.

It localises to the cytoplasm. Its subcellular location is the nucleus. Functionally, the complex LTO1:YAE1 functions as a target specific adapter that probably recruits apo-ABCE1 to the cytosolic iron-sulfur protein assembly (CIA) complex machinery. May be required for biogenesis of the large ribosomal subunit and initiation of translation. The protein is Protein YAE1 homolog of Homo sapiens (Human).